The sequence spans 325 residues: MAPKQLKKIENPVVSSSEEEESASSGESATSGEESDSSADSPVKESSKKPVVVSKPSGSKTTTKPESSTAAKRSFEKTDEMSKKKSKNSMGEEDVKKKDETLKKNLFVRLFTEEDEAILLQGFLDFATKKENPSDHIDDFYESIKNSISFDVTKPQLVTKIGNLKKKFNGRVSKGLKKGKNEEVMVFSKASDQNCFDLSRKIWGSNGVLYSKSKNMRQVQLGGSVKVDEDDQEPQKHRFVISTLSSGQELVSYLKVENPNSLGVDDTKWSAKLDKIKDGKQKRKMEKNLKKIQAKEEELSMMRSEFVAAVTNVLSKQDNASYSCK.

The disordered stretch occupies residues 1–98 (MAPKQLKKIE…SMGEEDVKKK (98 aa)). Composition is skewed to low complexity over residues 23–32 (ASSGESATSG) and 49–69 (KPVVVSKPSGSKTTTKPESST). A compositionally biased stretch (basic and acidic residues) spans 73-83 (RSFEKTDEMSK).

The protein belongs to the GeBP family.

The sequence is that of Probable transcription factor At4g01260 from Arabidopsis thaliana (Mouse-ear cress).